Consider the following 277-residue polypeptide: 3-methyl-2-oxobutanoate hydroxymethyltransferase (277 aa).

Asp43 and Asp82 together coordinate Mg(2+). Residues Asp43–Ser44, Asp82, and Lys112 contribute to the 3-methyl-2-oxobutanoate site. Glu114 is a binding site for Mg(2+). The active-site Proton acceptor is Glu181.

This sequence belongs to the PanB family. In terms of assembly, homodecamer; pentamer of dimers. The cofactor is Mg(2+).

Its subcellular location is the cytoplasm. It carries out the reaction 3-methyl-2-oxobutanoate + (6R)-5,10-methylene-5,6,7,8-tetrahydrofolate + H2O = 2-dehydropantoate + (6S)-5,6,7,8-tetrahydrofolate. The protein operates within cofactor biosynthesis; (R)-pantothenate biosynthesis; (R)-pantoate from 3-methyl-2-oxobutanoate: step 1/2. Its function is as follows. Catalyzes the reversible reaction in which hydroxymethyl group from 5,10-methylenetetrahydrofolate is transferred onto alpha-ketoisovalerate to form ketopantoate. The polypeptide is 3-methyl-2-oxobutanoate hydroxymethyltransferase (Listeria innocua serovar 6a (strain ATCC BAA-680 / CLIP 11262)).